The chain runs to 101 residues: Anti-sigma factor RshA (101 aa).

Residues 1-20 are disordered; that stretch reads MSETEREDERWTPPIGPIDP. Cysteine 25, histidine 51, cysteine 55, and cysteine 58 together coordinate iron-sulfur cluster. Position 96 is a phosphothreonine (threonine 96).

This sequence belongs to the zinc-associated anti-sigma factor (ZAS) superfamily. As to quaternary structure, interacts with cognate ECF RNA polymerase sigma factor SigH under reducing conditions; the complex is disrupted under oxiding conditions or as temperatures rise. Binding inhibits the interaction of SigH with the RNA polymerase catalytic core. The cofactor is iron-sulfur cluster. In terms of processing, phosphorylated, probably by PknB. Phosphorylation decreases interaction with SigH, probably leading to increased SigH-mediated transcription.

In terms of biological role, a redox-regulated anti-sigma factor for cognate extracytoplasmic function (ECF) sigma factor SigH. ECF sigma factors are held in an inactive form by an anti-sigma factor. Overexpression leads to increased susceptibility to diamide. The chain is Anti-sigma factor RshA (rshA) from Mycolicibacterium smegmatis (strain ATCC 700084 / mc(2)155) (Mycobacterium smegmatis).